Consider the following 479-residue polypeptide: GTPase Obg (479 aa).

Residues 2–159 (PRFVDRVVIH…RDLTLELKTV (158 aa)) enclose the Obg domain. Residues 160–340 (ADVGLVGFPS…LIFGLWQMVS (181 aa)) form the OBG-type G domain. Residues 166-173 (GFPSAGKS), 191-195 (FTTLV), 212-215 (DVPG), 292-295 (NKID), and 321-323 (STV) each bind GTP. 2 residues coordinate Mg(2+): Ser-173 and Thr-193. Residues 358-436 (PVPVDDSGFD…IGEMTFDWEP (79 aa)) form the OCT domain. Residues 438–479 (TPAGGHVAMSGRGTDVRLERSDRVGAAERKAARRQRRERDDD) are disordered. Over residues 451 to 467 (TDVRLERSDRVGAAERK) the composition is skewed to basic and acidic residues.

This sequence belongs to the TRAFAC class OBG-HflX-like GTPase superfamily. OBG GTPase family. As to quaternary structure, monomer. The cofactor is Mg(2+).

The protein resides in the cytoplasm. An essential GTPase which binds GTP, GDP and possibly (p)ppGpp with moderate affinity, with high nucleotide exchange rates and a fairly low GTP hydrolysis rate. Plays a role in control of the cell cycle, stress response, ribosome biogenesis and in those bacteria that undergo differentiation, in morphogenesis control. The polypeptide is GTPase Obg (Mycobacterium marinum (strain ATCC BAA-535 / M)).